Reading from the N-terminus, the 300-residue chain is GTPase Era (300 aa).

In terms of domain architecture, Era-type G spans K7–F175. Residues G15–S22 are G1. Residue G15–S22 participates in GTP binding. The G2 stretch occupies residues Q41–Q45. The segment at D62 to G65 is G3. GTP contacts are provided by residues D62 to F66 and N124 to D127. The G4 stretch occupies residues N124–D127. Residues I154–A156 form a G5 region. The KH type-2 domain occupies I198–P283.

Belongs to the TRAFAC class TrmE-Era-EngA-EngB-Septin-like GTPase superfamily. Era GTPase family. Monomer.

The protein resides in the cytoplasm. The protein localises to the cell inner membrane. Its function is as follows. An essential GTPase that binds both GDP and GTP, with rapid nucleotide exchange. Plays a role in 16S rRNA processing and 30S ribosomal subunit biogenesis and possibly also in cell cycle regulation and energy metabolism. In Elusimicrobium minutum (strain Pei191), this protein is GTPase Era.